Reading from the N-terminus, the 252-residue chain is tRNA (guanine-N(1)-)-methyltransferase (252 aa).

Residues Gly113 and 133-138 (IGDYVL) contribute to the S-adenosyl-L-methionine site.

Belongs to the RNA methyltransferase TrmD family. In terms of assembly, homodimer.

It localises to the cytoplasm. The catalysed reaction is guanosine(37) in tRNA + S-adenosyl-L-methionine = N(1)-methylguanosine(37) in tRNA + S-adenosyl-L-homocysteine + H(+). In terms of biological role, specifically methylates guanosine-37 in various tRNAs. This is tRNA (guanine-N(1)-)-methyltransferase from Baumannia cicadellinicola subsp. Homalodisca coagulata.